A 316-amino-acid chain; its full sequence is Adenine deaminase (316 aa).

3 residues coordinate Zn(2+): H14, H16, and H194. E197 serves as the catalytic Proton donor. D275 is a binding site for Zn(2+). D276 contacts substrate.

This sequence belongs to the metallo-dependent hydrolases superfamily. Adenosine and AMP deaminases family. Adenine deaminase type 2 subfamily. Requires Zn(2+) as cofactor.

The enzyme catalyses adenine + H2O + H(+) = hypoxanthine + NH4(+). Catalyzes the hydrolytic deamination of adenine to hypoxanthine. Plays an important role in the purine salvage pathway and in nitrogen catabolism. This chain is Adenine deaminase, found in Pseudomonas paraeruginosa (strain DSM 24068 / PA7) (Pseudomonas aeruginosa (strain PA7)).